A 770-amino-acid chain; its full sequence is ARF GTPase-activating protein GIT1 (770 aa).

The region spanning 1 to 124 (MSRKGPRAEV…AFVHKLPCRD (124 aa)) is the Arf-GAP domain. Residues 1-124 (MSRKGPRAEV…AFVHKLPCRD (124 aa)) form an interaction with gamma-tubulin and localization to the centrosome region. Residues 11–34 (CADCSAPDPGWASISRGVLVCDEC) form a C4-type zinc finger. ANK repeat units follow at residues 132 to 161 (DLSK…QANF), 166 to 195 (KGTT…DPGS), and 199 to 228 (NGRT…ELTD). A Phosphotyrosine modification is found at Tyr-224. The tract at residues 245–374 (HYIIPQMADR…QGKSLSSPTD (130 aa)) is interaction with PCLO. The tract at residues 253 to 424 (DRSRQKCMSQ…NRARSMDSSD (172 aa)) is interaction with PTK2/FAK1. An interaction with ARHGEF7 region spans residues 254-376 (RSRQKCMSQS…KSLSSPTDNL (123 aa)). The disordered stretch occupies residues 363-425 (RQQGKSLSSP…RARSMDSSDL (63 aa)). Positions 366 to 383 (GKSLSSPTDNLELSARNQ) are enriched in polar residues. Residues Ser-368 and Ser-371 each carry the phosphoserine modification. At Thr-373 the chain carries Phosphothreonine. The interaction with NCK2 and GRIN3A stretch occupies residues 375-596 (NLELSARNQS…QEGSRHASKL (222 aa)). Residues 375–596 (NLELSARNQS…QEGSRHASKL (222 aa)) form a required for localization at synapses region. 2 positions are modified to phosphoserine: Ser-379 and Ser-384. Tyr-392 carries the phosphotyrosine modification. A phosphoserine mark is found at Ser-394 and Ser-397. The span at 394–403 (SVASDEDTDQ) shows a compositional bias: acidic residues. Thr-401 is modified (phosphothreonine). Phosphoserine is present on residues Ser-419, Ser-422, and Ser-426. The segment at 420 to 475 (MDSSDLSDGAVTLQEYLELKKALATSEAKVQQLMKVNSSLSDELRKLQREIHKLQA) is interaction with MAPK1. Positions 429 to 629 (AVTLQEYLEL…EGKRFLELSK (201 aa)) are interaction with IKBKG. Residues 449-483 (VQQLMKVNSSLSDELRKLQREIHKLQAENLQLRQP) adopt a coiled-coil conformation. Ser-507 and Ser-545 each carry phosphoserine. Residue Thr-546 is modified to Phosphothreonine. Tyr-554 and Tyr-563 each carry phosphotyrosine. Phosphoserine is present on residues Ser-570, Ser-580, Ser-601, and Ser-605. Residues 574–586 (VTFTPSSPLLSSS) show a composition bias toward low complexity. The disordered stretch occupies residues 574 to 615 (VTFTPSSPLLSSSQEGSRHASKLSRHGSGAESDYENTQSGEP). Thr-610 is modified (phosphothreonine). Residue Ser-639 is modified to Phosphoserine. Positions 646-770 (PGLPSTEDVI…VTITTREKKQ (125 aa)) are interaction with PXN and TGFB1I1.

As to quaternary structure, forms homodimers and possibly oligomers. May form heterooligomers with GIT2. Interacts with G protein-coupled receptor kinases, including GRK2, GRK3, GRK5 and GRK6. Interacts with PPFIA1, PPFIA2 and PPFIA4. Interacts with GRIP1 and forms a ternary complex with PPFIA1 and GRIP1. Directly interacts with ARHGEF7/beta-PIX, forming in vitro a heptameric complex made of a GIT1 dimer and an ARHGEF7 trimer. Directly interacts with PXN/paxillin; this interaction is enhanced in the presence of ARHGEF7. Directly interacts (via C-terminus) with TGFB1I1/Hic-5 (via LD motif 3). Directly interacts with PTK2/FAK1. May interact with PTK2B/PYK2; this interaction may be indirect. Interacts with AMPA receptors GRIA2/3. Directly interacts with protein Piccolo/PCLO. Forms a complex with Ephrin-B1/EFNB1 and NCK2/GRB4 (via SH2); this interaction is important for spine morphogenesis and synapse formation. Interaction with NCK2 is transient and depends upon GIT1 phosphorylation at Tyr-392. Interacts with GRIN3A/GluN3A (via C-terminus); this interaction competes with GIT1 interaction with ARHGEF7 and limits synaptic localization of GIT1. Interacts with IKBKG/NEMO in resting bone mesenchymal stem cells, as well as in TNF-stimulated cells; this interaction may increase IKBKG affinity for 'Lys-63'-linked polyubiquitin chains. Interacts with GABA(A) receptors, including GABRB3 and GABRG2. Interacts with SCRIB. Interacts (via N- and C-terminus) with ENTR1/SDCCAG3 (via N-terminus); this interaction is direct. May form a tripartite complex with ENTR1 and PTPN13. Interacts with YWHAZ. Interacts with PAK1 and PAK3. Directly interacts (via N-terminus) with gamma-tubulin. Interacts with MAPK1 and MAPK3; this interaction is required for MAPK1/3 recruitment to focal adhesions. Phosphorylated on tyrosine residues by PTK2/FAK1 and SRC in growing fibroblasts. Phosphorylation at Tyr-392 is induced by activation of Ephrin-B1/EFNB1 and catalyzed by SRC family kinases. It is required for the interaction with NCK2 and for GIT1 recruitment to synapses in hippocampal neurons. In terms of tissue distribution, widely expressed. Expressed at high levels in testis (at protein level). Expressed in the brain, including in CA1 hippocampal neurons, in the amygdala, and thalamic nuclei (at protein level).

It is found in the cytoplasm. It localises to the synapse. The protein resides in the presynapse. The protein localises to the postsynapse. Its subcellular location is the postsynaptic density. It is found in the cell junction. It localises to the focal adhesion. The protein resides in the cell projection. The protein localises to the lamellipodium. Its subcellular location is the cytoskeleton. It is found in the microtubule organizing center. It localises to the centrosome. The protein resides in the spindle pole. Its function is as follows. GTPase-activating protein for ADP ribosylation factor family members, including ARF1. Multidomain scaffold protein that interacts with numerous proteins and therefore participates in many cellular functions, including receptor internalization, focal adhesion remodeling, and signaling by both G protein-coupled receptors and tyrosine kinase receptors. Through PAK1 activation, positively regulates microtubule nucleation during interphase. Plays a role in the regulation of cytokinesis; for this function, may act in a pathway also involving ENTR1 and PTPN13. May promote cell motility both by regulating focal complex dynamics and by the activation of RAC1. May act as scaffold for MAPK1/3 signal transduction, recruiting MAPK1/3 to focal adhesions after EGF stimulation via a Src-dependent pathway, hence stimulating cell migration. Plays a role in brain development and function. Involved in the regulation of spine density and synaptic plasticity that is required for processes involved in learning. Plays an important role in dendritic spine morphogenesis and synapse formation. In hippocampal neurons, recruits guanine nucleotide exchange factors (GEFs), such as ARHGEF7/beta-PIX, to the synaptic membrane. These in turn locally activate RAC1, which is an essential step for spine morphogenesis and synapse formation. May contribute to the organization of presynaptic active zones through oligomerization and formation of a Piccolo/PCLO-based protein network, which includes ARHGEF7/beta-PIX and FAK1. In neurons, through its interaction with liprin-alpha family members, may be required for AMPA receptor (GRIA2/3) proper targeting to the cell membrane. In complex with GABA(A) receptors and ARHGEF7, plays a crucial role in regulating GABA(A) receptor synaptic stability, maintaining GPHN/gephyrin scaffolds and hence GABAergic inhibitory synaptic transmission, by locally coordinating RAC1 and PAK1 downstream effector activity, leading to F-actin stabilization. May also be important for RAC1 downstream signaling pathway through PAK3 and regulation of neuronal inhibitory transmission at presynaptic input. Required for successful bone regeneration during fracture healing. The function in intramembranous ossification may, at least partly, exerted by macrophages in which GIT1 is a key negative regulator of redox homeostasis, IL1B production, and glycolysis, acting through the ERK1/2/NRF2/NFE2L2 axis. May also play a role in angiogenesis during fracture healing. In this process, may regulate activation of the canonical NF-kappa-B signal in bone mesenchymal stem cells by enhancing the interaction between NEMO and 'Lys-63'-ubiquitinated RIPK1/RIP1, eventually leading to enhanced production of VEGFA and others angiogenic factors. Essential for VEGF signaling through the activation of phospholipase C-gamma and ERK1/2, hence may control endothelial cell proliferation and angiogenesis. This Rattus norvegicus (Rat) protein is ARF GTPase-activating protein GIT1.